A 46-amino-acid polypeptide reads, in one-letter code: Thymosin beta-a (46 aa).

A compositionally biased stretch (polar residues) spans 21 to 30 (TNTAEKNTLP). Residues 21-46 (TNTAEKNTLPTKEDIDQEKKAAEGGK) are disordered. Basic and acidic residues predominate over residues 31 to 46 (TKEDIDQEKKAAEGGK).

The protein belongs to the thymosin beta family.

It localises to the cytoplasm. Its subcellular location is the cytoskeleton. Its function is as follows. Plays an important role in the organization of the cytoskeleton. Binds to and sequesters actin monomers (G actin) and therefore inhibits actin polymerization. The polypeptide is Thymosin beta-a (Cyprinus carpio (Common carp)).